Consider the following 305-residue polypeptide: Formamidopyrimidine-DNA glycosylase (305 aa).

Catalysis depends on P2, which acts as the Schiff-base intermediate with DNA. The active-site Proton donor is the E3. K59 acts as the Proton donor; for beta-elimination activity in catalysis. The DNA site is built by H92, R111, and R154. The FPG-type zinc finger occupies 239–273 (QVFDRAGEPCPVCGTPIRKVAVAQRGTHFCPRCQP). The Proton donor; for delta-elimination activity role is filled by R263. The disordered stretch occupies residues 282-305 (PRRARPGRRGNSVRVAAEPPGTYE).

Belongs to the FPG family. Monomer. Zn(2+) serves as cofactor.

The catalysed reaction is Hydrolysis of DNA containing ring-opened 7-methylguanine residues, releasing 2,6-diamino-4-hydroxy-5-(N-methyl)formamidopyrimidine.. It catalyses the reaction 2'-deoxyribonucleotide-(2'-deoxyribose 5'-phosphate)-2'-deoxyribonucleotide-DNA = a 3'-end 2'-deoxyribonucleotide-(2,3-dehydro-2,3-deoxyribose 5'-phosphate)-DNA + a 5'-end 5'-phospho-2'-deoxyribonucleoside-DNA + H(+). Its function is as follows. Involved in base excision repair of DNA damaged by oxidation or by mutagenic agents. Acts as a DNA glycosylase that recognizes and removes damaged bases. Has a preference for oxidized purines, such as 7,8-dihydro-8-oxoguanine (8-oxoG). Has AP (apurinic/apyrimidinic) lyase activity and introduces nicks in the DNA strand. Cleaves the DNA backbone by beta-delta elimination to generate a single-strand break at the site of the removed base with both 3'- and 5'-phosphates. The chain is Formamidopyrimidine-DNA glycosylase from Symbiobacterium thermophilum (strain DSM 24528 / JCM 14929 / IAM 14863 / T).